Here is a 404-residue protein sequence, read N- to C-terminus: MAIHNCEGENVSTENKAVYMDNSATTPVRKEVVEAMLPYMTENFGNPSSIYEIGKTSKHAINLARKKAADALGAEENEIYFTSGGTESDNWAIKGIAFANRDKGKHIITSSIEHHAVLHTCAWLEGQGFEVTYLPVDKYGMVSPDELRNAIRDDTILISIMFANNEIGTIQPIKEIGEIAKENQIYFHTDAVQAIGHVPIDVKKLNIDLLSLSGHEFEGPKGCGALYIRKGVKIDPLLHGGAQERKRRAGTENVPGIVGLGKATELATAEIEESNRTLLKLRDRLIEGLLKIPKTHLNGHPTQRLANNVNVTFEYIEGESLLLLLNAKGIYASTGSACNSSSLEPSHVLTACGVPHEIIHGSLRLSLGRMNTSEDVDRVLEVVPEIVQKLRNMSPLTPKEYRTL.

Pyridoxal 5'-phosphate-binding positions include 85–86 (GT), Asn-165, Gln-193, 213–215 (SGH), and Thr-251. The active-site Cysteine persulfide intermediate is the Cys-338. Cys-338 is a binding site for [2Fe-2S] cluster.

The protein belongs to the class-V pyridoxal-phosphate-dependent aminotransferase family. NifS/IscS subfamily. In terms of assembly, homodimer. Forms a heterotetramer with IscU, interacts with other sulfur acceptors. The cofactor is pyridoxal 5'-phosphate.

The protein localises to the cytoplasm. The enzyme catalyses (sulfur carrier)-H + L-cysteine = (sulfur carrier)-SH + L-alanine. Its pathway is cofactor biosynthesis; iron-sulfur cluster biosynthesis. In terms of biological role, master enzyme that delivers sulfur to a number of partners involved in Fe-S cluster assembly, tRNA modification or cofactor biosynthesis. Catalyzes the removal of elemental sulfur atoms from cysteine to produce alanine. Functions as a sulfur delivery protein for Fe-S cluster synthesis onto IscU, an Fe-S scaffold assembly protein, as well as other S acceptor proteins. The polypeptide is Cysteine desulfurase IscS (Methanosarcina thermophila).